The chain runs to 152 residues: UPF0225 protein KPK_2103 (152 aa).

Belongs to the UPF0225 family.

The polypeptide is UPF0225 protein KPK_2103 (Klebsiella pneumoniae (strain 342)).